Here is a 259-residue protein sequence, read N- to C-terminus: MEHKINRREKEKDYEGKHNSLEDADQGKNCKSTLMTLNVGGYLYITQKQTLTKYPDTFLEGIVNGKILCPFDADGHYFIDRDGLLFRHVLNFLRNGELLLPEGFRENQLLAQEAEFFQLKGLAEEVKSRWEKEQLTPRETTFLEITDNHDRSQGLRIFCNAPDFISKIKSRIVLVSKSRLDGFPEEFSISSNTIQFKYFIKSENGTRLVLKEDNTFVCTLETLKFEAIMMALKCGFRLLTSLDCSKGSIVHSDALHFIK.

The tract at residues 1 to 22 is disordered; that stretch reads MEHKINRREKEKDYEGKHNSLE. The 102-residue stretch at 33–134 folds into the BTB domain; the sequence is TLMTLNVGGY…EVKSRWEKEQ (102 aa).

This Bos taurus (Bovine) protein is BTB/POZ domain-containing protein KCTD4 (KCTD4).